We begin with the raw amino-acid sequence, 113 residues long: Large ribosomal subunit protein uL22 (113 aa).

This sequence belongs to the universal ribosomal protein uL22 family. As to quaternary structure, part of the 50S ribosomal subunit.

Its function is as follows. This protein binds specifically to 23S rRNA; its binding is stimulated by other ribosomal proteins, e.g. L4, L17, and L20. It is important during the early stages of 50S assembly. It makes multiple contacts with different domains of the 23S rRNA in the assembled 50S subunit and ribosome. In terms of biological role, the globular domain of the protein is located near the polypeptide exit tunnel on the outside of the subunit, while an extended beta-hairpin is found that lines the wall of the exit tunnel in the center of the 70S ribosome. The sequence is that of Large ribosomal subunit protein uL22 from Pelotomaculum thermopropionicum (strain DSM 13744 / JCM 10971 / SI).